The following is a 441-amino-acid chain: Growth/differentiation factor 9 (441 aa).

A signal peptide spans 1 to 29; sequence MALPSNFLLGVCCFAWLCFLSSLSSQAST. A propeptide spanning residues 30–306 is cleaved from the precursor; that stretch reads EESQSGASEN…EVERSPRRRR (277 aa). Asparagine 163, asparagine 229, asparagine 258, and asparagine 325 each carry an N-linked (GlcNAc...) asparagine glycan. Cystine bridges form between cysteine 340–cysteine 406, cysteine 369–cysteine 438, and cysteine 373–cysteine 440.

The protein belongs to the TGF-beta family. Homodimer or heterodimer (Potential). But, in contrast to other members of this family, cannot be disulfide-linked. Post-translationally, phosphorylated; phosphorylation is critical for GDF9 function. As to expression, ovary. Strongly expressed in germinal vesicle (GV) stage oocytes, MII-stage oocytes and in zygotes.

The protein resides in the secreted. Functionally, required for ovarian folliculogenesis. This is Growth/differentiation factor 9 (Gdf9) from Mus musculus (Mouse).